A 158-amino-acid chain; its full sequence is Small ribosomal subunit protein bS6 (158 aa).

Residues 98–158 (EAPSAPLARR…DRDEDQNEEN (61 aa)) are disordered. Composition is skewed to basic and acidic residues over residues 106–117 (RRGEDRDRDRGF) and 127–150 (DSGR…RSDR).

The protein belongs to the bacterial ribosomal protein bS6 family.

Binds together with bS18 to 16S ribosomal RNA. This chain is Small ribosomal subunit protein bS6, found in Acidiphilium cryptum (strain JF-5).